The primary structure comprises 31 residues: Bacteriocin leucocin-B (31 aa).

The protein localises to the secreted. Inhibits a wide spectrum of lactic acid bacteria. The polypeptide is Bacteriocin leucocin-B (Leuconostoc mesenteroides).